The primary structure comprises 448 residues: Antizyme inhibitor 1 (448 aa).

This sequence belongs to the Orn/Lys/Arg decarboxylase class-II family. ODC antizyme inhibitor subfamily. As to quaternary structure, monomer. Interacts with OAZ1 and OAZ3; this interaction disrupts the interaction between the antizyme and ODC1. Post-translationally, ubiquitinated, leading to its proteasomal degradation; a process that is reduced in presence of antizyme OAZ1.

The protein resides in the nucleus. Its function is as follows. Antizyme inhibitor (AZI) protein that positively regulates ornithine decarboxylase (ODC) activity and polyamine uptake. AZI is an enzymatically inactive ODC homolog that counteracts the negative effect of ODC antizymes (AZs) OAZ1, OAZ2 and OAZ3 on ODC activity by competing with ODC for antizyme-binding. Inhibits antizyme-dependent ODC degradation and releases ODC monomers from their inactive complex with antizymes, leading to formation of the catalytically active ODC homodimer and restoring polyamine production. In Pongo abelii (Sumatran orangutan), this protein is Antizyme inhibitor 1 (AZIN1).